Here is a 148-residue protein sequence, read N- to C-terminus: Large ribosomal subunit protein bL9 (148 aa).

This sequence belongs to the bacterial ribosomal protein bL9 family.

Functionally, binds to the 23S rRNA. In Bacillus cereus (strain B4264), this protein is Large ribosomal subunit protein bL9.